Reading from the N-terminus, the 306-residue chain is Probable cobalamin biosynthesis protein CobD (306 aa).

6 helical membrane passes run 17-37, 54-74, 88-108, 155-175, 207-227, and 286-306; these read IGEPPEKVHPVIFIGKLIIFF, LFGFFNVILVLAIVFFMAYEI, ISLYSIILSFSIGHKSLIEFS, ITDSIIAPLIYVAIFGLPGAF, ILNFIPSRIAGMLLIITAPFY, and SLKAVDYSVLLFLIIYTVLLM.

The protein belongs to the CobD/CbiB family.

Its subcellular location is the cell membrane. The protein operates within cofactor biosynthesis; adenosylcobalamin biosynthesis. In terms of biological role, converts cobyric acid to cobinamide by the addition of aminopropanol on the F carboxylic group. The polypeptide is Probable cobalamin biosynthesis protein CobD (Methanococcus maripaludis (strain C5 / ATCC BAA-1333)).